A 966-amino-acid chain; its full sequence is Glycine dehydrogenase (decarboxylating) (966 aa).

Lysine 713 carries the N6-(pyridoxal phosphate)lysine modification.

This sequence belongs to the GcvP family. In terms of assembly, the glycine cleavage system is composed of four proteins: P, T, L and H. The cofactor is pyridoxal 5'-phosphate.

The enzyme catalyses N(6)-[(R)-lipoyl]-L-lysyl-[glycine-cleavage complex H protein] + glycine + H(+) = N(6)-[(R)-S(8)-aminomethyldihydrolipoyl]-L-lysyl-[glycine-cleavage complex H protein] + CO2. Functionally, the glycine cleavage system catalyzes the degradation of glycine. The P protein binds the alpha-amino group of glycine through its pyridoxal phosphate cofactor; CO(2) is released and the remaining methylamine moiety is then transferred to the lipoamide cofactor of the H protein. The polypeptide is Glycine dehydrogenase (decarboxylating) (Shewanella halifaxensis (strain HAW-EB4)).